A 1297-amino-acid polypeptide reads, in one-letter code: MKLKKQIRFYNKAMSRTALNELIRRLIDRFGMMCTSHILDQLKTLGFHQATDASFSLGIDDLLAAPSKWWLVKEEDQQGFFSEKQNLSGNLHTVETLRQLMERWHTTSEYLKEEMYPKFQLTNSFNPVYMMSFSGARGNKSQVHQLLGIRGLMSDPQGKIVDLPIQGNFQEGLSLTEYIISSYGARKGVVDTAVRTADAGYLTRRLVEVVQHIIVRKTDCGTTQGIFISPIQDRDRSKENVFLQKITGRVLADDVYINRRCIATRNQDISAGLANQFKNLLIQAISIRTPFTCKSLSWICQLCYGRSLSHNNLIELGEAVGIIAGQSIGEPGTQLTLRTFHTGGVFTGNIVGTIRAPFNGRIQFNSNLVYSTRTFFGHPAFICRKKLFIIIDDGGDKVDYSLLPTKSWVFVQNHQYVESEQLIGEFRTTTSLLKEKVLKYIYSELNGEMHWSTFVCHALKHTQGNAHFTFGAVHLWILSGGIYNPKVVLSFPFPKDQDQVTIAFLSTKQKNCFDPSVNLLQSNSVSFQNPKLEEEKLEEEKLEEEPDQSSISVPIFLENFNIQGKKQINRVLVPFFYAPKRKTKRKKRKNYPNCILKIPRSGFLHRNTTFCIWNDSQYKSPSPGFLEYSDSPEKFVLIPEEVHFFEKSSPIAIQNKSIIRADTQITAKKKSQVGGLVQIHKKKTKLVVKILPGYIDFYRKKNKKYWYKTFVSPRQNLGEDFLSEKNYFQTLNKPHRKKSFVLLRTAVEYKIPNPKEIKVPFCPDLLREEDNLHIQMSNCFYGDGGKKLQKGIQLIQTCLIFNWEQIDSTESETSISITSIRIKNIVINTIQFSLRKHSDSAWSQKKNQISSKRTFPPVLDKTQSFSLSGKIQLPSNYTATFRSLNNEKNMFLILSTSDCFRIHLFQTKKNDNIQNKSNPNKPINNHFVGFFGHLHSIENLYPSSHFLNYNKILFNKFCYNFNIFEIPNCYILDEFQKVLIYPRINHLWNPKKMRYRRYSKNRYPTMNLGQLLWENFAICKNESFSESGQIIAVREESLVVRLAKPYLATPKATIHGNFAEIINQGDPLITFFYERFKSSDITQGLPKVEQLAEAQSNNPVVQNIEENFRIWNQDMTRTFGSFWGLFISTKITMEQGRIHFVDQIQKVYQSQGVHICEKHIELIIRQMTSRVLVSDDVIFNVFLPGELIGLSRAQRIDRAFDEAIHYKTKLLGITKASFDTPSFISEASFQETARVLAKAAIQGRIDWLKGLKENVILSNIIPAGTGKKTNYSLFARRRRRKQNTKTRKNNLFSLNEK.

Zn(2+) contacts are provided by C220, C293, C300, and C303. A compositionally biased stretch (basic residues) spans 1278–1288 (RRRKQNTKTRK). Positions 1278–1297 (RRRKQNTKTRKNNLFSLNEK) are disordered.

The protein belongs to the RNA polymerase beta' chain family. RpoC2 subfamily. In plastids the minimal PEP RNA polymerase catalytic core is composed of four subunits: alpha, beta, beta', and beta''. When a (nuclear-encoded) sigma factor is associated with the core the holoenzyme is formed, which can initiate transcription. Zn(2+) is required as a cofactor.

Its subcellular location is the plastid. It localises to the chloroplast. It carries out the reaction RNA(n) + a ribonucleoside 5'-triphosphate = RNA(n+1) + diphosphate. Its function is as follows. DNA-dependent RNA polymerase catalyzes the transcription of DNA into RNA using the four ribonucleoside triphosphates as substrates. The chain is DNA-directed RNA polymerase subunit beta'' from Welwitschia mirabilis (Tree tumbo).